The chain runs to 262 residues: Small ribosomal subunit protein uS2 (262 aa).

The tract at residues 224 to 246 (GNQGEDQDDAQEQQVAADKKADS) is disordered.

It belongs to the universal ribosomal protein uS2 family.

This Lacticaseibacillus casei (strain BL23) (Lactobacillus casei) protein is Small ribosomal subunit protein uS2.